The primary structure comprises 144 residues: Transcriptional regulator MraZ (144 aa).

2 SpoVT-AbrB domains span residues 5 to 47 (EYDH…TLDE) and 76 to 119 (AVEV…DRET).

It belongs to the MraZ family. As to quaternary structure, forms oligomers.

The protein resides in the cytoplasm. Its subcellular location is the nucleoid. This is Transcriptional regulator MraZ from Staphylococcus aureus.